Consider the following 108-residue polypeptide: Small ribosomal subunit protein uS17 (108 aa).

The disordered stretch occupies residues 1 to 26; it reads MREKMAEATETQASETSTRGRPKTRV. The span at 8–17 shows a compositional bias: low complexity; sequence ATETQASETS.

It belongs to the universal ribosomal protein uS17 family. In terms of assembly, part of the 30S ribosomal subunit.

Its function is as follows. One of the primary rRNA binding proteins, it binds specifically to the 5'-end of 16S ribosomal RNA. The polypeptide is Small ribosomal subunit protein uS17 (Myxococcus xanthus (strain DK1622)).